A 228-amino-acid chain; its full sequence is Eukaryotic translation initiation factor 4E-2 (228 aa).

The cysteines at positions 130 and 134 are disulfide-linked.

Belongs to the eukaryotic initiation factor 4E family. As to quaternary structure, eIF4F is a multi-subunit complex, the composition of which varies with external and internal environmental conditions. It is composed of at least eIF4A, eIF4E and eIF4G. eIF4E is also known to interact with other partners. As to expression, highly expressed in all somatic tissues.

Functionally, recognizes and binds the 7-methylguanosine-containing mRNA cap during an early step in the initiation of protein synthesis and facilitates ribosome binding by inducing the unwinding of the mRNAs secondary structures. All 5 eIF4E proteins bind monomethyl cap structures. Only ife-1, ife-2 and ife-5 bind trimethyl cap structures which result from trans-splicing. Translation of trimethyl cap structure mRNAs may be regulated by intracellular redox state; disulfide bonds change the width and depth of the cap-binding cavity determining selectivity to mRNA caps. Probably by regulating mRNA translation in somatic cells, negatively regulates lifespan independently of daf-2/insulin and let-363/TOR pathways. Negatively regulates resistance to oxidative stress. May play a role in embryonic development. The polypeptide is Eukaryotic translation initiation factor 4E-2 (ife-2) (Caenorhabditis elegans).